The following is a 329-amino-acid chain: MYNFKDSVSITVISGNGGSGCVSFLREKFNAKGGPDGGNGGSGGSVIFKVKENLRTLSSYKNGHVLCAKNGRPGMSFKRSGANGKDLILFVPPNTDIYNENDEALLCRLEKLNDEFVILKGGRGGLGNWNFKTSIRRAPRFAQPGESGNSLNVRLELFLVADIGLVGPPNAGKSSLLNRITSAKSRVANYPFTTKIPHLGVLRYSYDDLIIADIPGIIKGASFGVGLGTKFLKHITKTKILALVIDISEANFLESYNILLNELKSYSYKLFNKKKIIIANKLDLDSSEKNFNCLIKALGKEEKIIGISIYENRGIDELIKEFFILAKAF.

The 159-residue stretch at Y2–V160 folds into the Obg domain. Positions A161–K327 constitute an OBG-type G domain. GTP-binding positions include G167–S174, F192–I196, D213–G216, N280–D283, and S308–Y310. S174 and T194 together coordinate Mg(2+).

This sequence belongs to the TRAFAC class OBG-HflX-like GTPase superfamily. OBG GTPase family. As to quaternary structure, monomer. Requires Mg(2+) as cofactor.

It is found in the cytoplasm. In terms of biological role, an essential GTPase which binds GTP, GDP and possibly (p)ppGpp with moderate affinity, with high nucleotide exchange rates and a fairly low GTP hydrolysis rate. Plays a role in control of the cell cycle, stress response, ribosome biogenesis and in those bacteria that undergo differentiation, in morphogenesis control. The chain is GTPase Obg from Borrelia garinii subsp. bavariensis (strain ATCC BAA-2496 / DSM 23469 / PBi) (Borreliella bavariensis).